We begin with the raw amino-acid sequence, 466 residues long: Adenosylhomocysteinase (466 aa).

Residues T57, D132, and E192 each coordinate substrate. Position 193-195 (193-195 (TTT)) interacts with NAD(+). Residues K222 and D226 each coordinate substrate. NAD(+) is bound by residues N227, 256–261 (GYGDVG), E279, N314, 335–337 (IGH), and N380.

It belongs to the adenosylhomocysteinase family. NAD(+) serves as cofactor.

The protein localises to the cytoplasm. The catalysed reaction is S-adenosyl-L-homocysteine + H2O = L-homocysteine + adenosine. It participates in amino-acid biosynthesis; L-homocysteine biosynthesis; L-homocysteine from S-adenosyl-L-homocysteine: step 1/1. Functionally, may play a key role in the regulation of the intracellular concentration of adenosylhomocysteine. In Rhizobium etli (strain ATCC 51251 / DSM 11541 / JCM 21823 / NBRC 15573 / CFN 42), this protein is Adenosylhomocysteinase.